Here is a 211-residue protein sequence, read N- to C-terminus: Protein CHLORORESPIRATORY REDUCTION 41, chloroplastic (211 aa).

The transit peptide at Met-1–Lys-38 directs the protein to the chloroplast. The stretch at Ala-136–Met-163 forms a coiled coil.

Biogenesis factor component of the plastidial NDH subcomplex A.

It localises to the plastid. The protein localises to the chloroplast. Its subcellular location is the chloroplast stroma. Functionally, required for both formation and activity of the chloroplast NAD(P)H dehydrogenase (NDH) complex of the photosynthetic electron transport chain. Functions in assembly or stabilization of the NDH complex; probably involved, together with NdhO and NdhH, in the formation of an NDH subcomplex A assembly intermediate (NAI500). The chain is Protein CHLORORESPIRATORY REDUCTION 41, chloroplastic from Arabidopsis thaliana (Mouse-ear cress).